The primary structure comprises 96 residues: Co-chaperonin GroES (96 aa).

It belongs to the GroES chaperonin family. As to quaternary structure, heptamer of 7 subunits arranged in a ring. Interacts with the chaperonin GroEL.

It is found in the cytoplasm. Together with the chaperonin GroEL, plays an essential role in assisting protein folding. The GroEL-GroES system forms a nano-cage that allows encapsulation of the non-native substrate proteins and provides a physical environment optimized to promote and accelerate protein folding. GroES binds to the apical surface of the GroEL ring, thereby capping the opening of the GroEL channel. This is Co-chaperonin GroES from Caulobacter vibrioides (strain ATCC 19089 / CIP 103742 / CB 15) (Caulobacter crescentus).